Reading from the N-terminus, the 71-residue chain is DNA gyrase inhibitor YacG (71 aa).

Cys7, Cys10, Cys26, and Cys30 together coordinate Zn(2+).

It belongs to the DNA gyrase inhibitor YacG family. Interacts with GyrB. Zn(2+) is required as a cofactor.

Inhibits all the catalytic activities of DNA gyrase by preventing its interaction with DNA. Acts by binding directly to the C-terminal domain of GyrB, which probably disrupts DNA binding by the gyrase. The sequence is that of DNA gyrase inhibitor YacG from Shewanella amazonensis (strain ATCC BAA-1098 / SB2B).